Here is a 328-residue protein sequence, read N- to C-terminus: Gonadotropin-releasing hormone receptor (328 aa).

At 1–38 (MQDDTSSEQNPTHCSAINSSVPLVQGALPTLTLSGKIR) the chain is on the extracellular side. The N-linked (GlcNAc...) asparagine glycan is linked to Asn18. A helical membrane pass occupies residues 39–59 (VTVTFFLFLVSTTLNASFLLK). Over 60-84 (LQKWTQKKEKGKKLSRMKVLLKHLT) the chain is Cytoplasmic. Residues 85–105 (LANLLETLIVMPLDGMWNITV) form a helical membrane-spanning segment. Residues 106-115 (QWYAGELLCK) lie on the Extracellular side of the membrane. Residues Cys114 and Cys196 are joined by a disulfide bond. Residues 116 to 136 (ILSYLKLFSMYAPAFMMVVIS) traverse the membrane as a helical segment. The Cytoplasmic portion of the chain corresponds to 137–160 (LDRSMAITRPLPVQSNRKLEQSMT). The helical transmembrane segment at 161 to 181 (GLAWGLSSVLAGPQLYIFKMI) threads the bilayer. At 182 to 208 (HLENGPGQTEVFSQCVTHCSFPQWWHQ) the chain is on the extracellular side. Residues 209–229 (AFYNFFTFICLFIIPLLIMLI) traverse the membrane as a helical segment. Residues 230 to 271 (CNAKIIFTLTQVLQQDSNKLQLNQSKNNIPRARLRTLKMTVA) are Cytoplasmic-facing. A helical membrane pass occupies residues 272–292 (FAASFIVCWTPYYVLGLWYWF). Residues 293–306 (DPGMLHRMSEPVNH) lie on the Extracellular side of the membrane. Residues 307–327 (FFFLFAFLNPCFDPLIYGYFS) traverse the membrane as a helical segment. Position 328 (Leu328) is a topological domain, cytoplasmic.

Belongs to the G-protein coupled receptor 1 family.

The protein resides in the cell membrane. Its function is as follows. Receptor for gonadotropin releasing hormone (GnRH) that mediates the action of GnRH to stimulate the secretion of the gonadotropic hormones luteinizing hormone (LH) and follicle-stimulating hormone (FSH). This receptor mediates its action by association with G-proteins that activate a phosphatidylinositol-calcium second messenger system. The chain is Gonadotropin-releasing hormone receptor (GNRHR) from Cavia porcellus (Guinea pig).